Here is a 518-residue protein sequence, read N- to C-terminus: Reduced folate transporter (518 aa).

Residue Met-1 is modified to N-acetylmethionine. Residues 1 to 29 (MVPTGQVAEKQACEEPRQDRELKSWRCLV) are Cytoplasmic-facing. Residues 30–50 (FYLCFFGFMAQLRPGESFITP) traverse the membrane as a helical segment. Ile-48 and Thr-49 together coordinate folate. The Extracellular portion of the chain corresponds to 51–62 (YLLQQNFTIEQV). An N-linked (GlcNAc...) asparagine glycan is attached at Asn-56. A helical membrane pass occupies residues 63–85 (TNEIIPVLPYSHLAVLVPIFLLT). Residues 86-89 (DYLR) are Cytoplasmic-facing. A helical membrane pass occupies residues 90–110 (YKPILILQCLSFMCVWLLLLL). Residues 111–114 (GTSV) lie on the Extracellular side of the membrane. Residues 115–137 (VHMQLMEVFYSVTMAARIAYSSY) traverse the membrane as a helical segment. Folate contacts are provided by Glu-121 and Arg-131. Over 138–151 (IFSLVRPSRYQRMA) the chain is Cytoplasmic. The helical transmembrane segment at 152 to 176 (SYSRAAVLLGVFTSSVLGQVLWPLE) threads the bilayer. Val-162 provides a ligand contact to folate. Over 177 to 181 (QKSQN) the chain is Extracellular. The helical transmembrane segment at 182–200 (SNMLNYISLGFIIFSLGLS) threads the bilayer. Topologically, residues 201 to 266 (LFLKRPKHSL…LSELVGNLRQ (66 aa)) are cytoplasmic. The chain crosses the membrane as a helical span at residues 267–292 (PQLRLWCLWWVFNSAGYYLIVYYVHV). Residues Ala-281, Gly-282, and Ile-286 each coordinate folate. At 293 to 300 (LWSIDKNL) the chain is on the extracellular side. A helical membrane pass occupies residues 301–323 (NYNGAVDAASTLLSAITSFSAGF). The Cytoplasmic portion of the chain corresponds to 324-329 (VKIRWA). A helical membrane pass occupies residues 330–350 (LWSKLVIASVIAIQAGLVFCM). The Extracellular portion of the chain corresponds to 351 to 353 (YMV). Residues 354 to 377 (HYVTWVHKIWVLYMTYVLFRGAYQ) traverse the membrane as a helical segment. Tyr-366 and Val-370 together coordinate folate. Topologically, residues 378 to 391 (FLVPIATFQIASSL) are cytoplasmic. The chain crosses the membrane as a helical span at residues 392–415 (SKELCALVFGINTFLATALKTAIT). The segment at 407–419 (ATALKTAITLVVS) is required for substrate-binding. Residues 416–423 (LVVSDKRG) lie on the Extracellular side of the membrane. A helical membrane pass occupies residues 424 to 448 (LGLKVEKQFCIYSVYFMVLSVICFV). The Cytoplasmic portion of the chain corresponds to 449–512 (GAVLDGVRYC…DGVEDSEASL (64 aa)). 3 positions are modified to phosphoserine: Ser-473, Ser-478, and Ser-483. Residues 480-518 (QVPSMQDGGLGGLQPSAPQLLPEDGVEDSEASLRAEAKA) form a disordered region.

This sequence belongs to the reduced folate carrier (RFC) transporter (TC 2.A.48) family.

The protein resides in the cell membrane. It is found in the apical cell membrane. Its subcellular location is the basolateral cell membrane. It carries out the reaction 5-amino-1-(5-phospho-beta-D-ribosyl)imidazole-4-carboxamide(in) + (6S)-5-methyl-5,6,7,8-tetrahydrofolate(out) = 5-amino-1-(5-phospho-beta-D-ribosyl)imidazole-4-carboxamide(out) + (6S)-5-methyl-5,6,7,8-tetrahydrofolate(in). Antiporter that mediates the import of reduced folates, driven by the export of organic anions. Also acts as an importer of immunoreactive cyclic dinucleotides, but with a lower transporter activity. Mechanistically, acts as a secondary active transporter, which exports intracellular organic anions down their concentration gradients to facilitate the uptake of its substrates. Has high affinity for N5-methyltetrahydrofolate, the predominant circulating form of folate. Also mediates the import of antifolate drug methotrexate. 5-amino-4-imidazolecarboxamide riboside (AICAR), when phosphorylated to AICAR monophosphate, can serve as an organic anion for antiporter activity. The polypeptide is Reduced folate transporter (Cricetulus griseus (Chinese hamster)).